The primary structure comprises 99 residues: MEKMSHDPIAADIGTQVSDNALHGVTAGSTALTSVTGLVPAGADEVSAQAATAFTSEGIQLLASNASAQDQLHRAGEAVQDVARTYSQIDDGAAGVFAE.

The PE domain maps to 1-90 (MEKMSHDPIA…DVARTYSQID (90 aa)).

The protein belongs to the mycobacterial PE family. As to quaternary structure, interacts with PPE68. PE35/PPE68 complex interacts with human TLR2.

The protein resides in the secreted. It is found in the cell surface. In terms of biological role, plays a major role in RD1-associated pathogenesis, and may contribute to the establishment and maintenance of M.tuberculosis infection. Together with PPE68, stimulates the secretion of IL-10 and MCP-1 from human macrophages, via the interaction with human Toll-like receptor 2 (TLR2). This is PE family immunomodulator PE35 (PE35) from Mycobacterium tuberculosis (strain ATCC 25618 / H37Rv).